A 166-amino-acid chain; its full sequence is Large ribosomal subunit protein uL10 (166 aa).

The protein belongs to the universal ribosomal protein uL10 family. As to quaternary structure, part of the ribosomal stalk of the 50S ribosomal subunit. The N-terminus interacts with L11 and the large rRNA to form the base of the stalk. The C-terminus forms an elongated spine to which L12 dimers bind in a sequential fashion forming a multimeric L10(L12)X complex.

Functionally, forms part of the ribosomal stalk, playing a central role in the interaction of the ribosome with GTP-bound translation factors. The sequence is that of Large ribosomal subunit protein uL10 from Pseudomonas syringae pv. syringae (strain B728a).